The following is a 139-amino-acid chain: MKKAALLNSDISSVIARLGHTDSLVIGDAGLPIPETTTRIDLALTHNVPTFLQVVNVVTSEMQVEAAILAEEMIEKNPAVHDALLDQLKRLEQHQGNSIALHYVSHEEFKTQSGKSRAIIRSGECSPYANVILCAGVTF.

The Proton donor role is filled by H20. Residues D28, H106, and 128–130 (YAN) contribute to the substrate site.

Belongs to the RbsD / FucU family. RbsD subfamily. In terms of assembly, homodecamer.

The protein localises to the cytoplasm. It carries out the reaction beta-D-ribopyranose = beta-D-ribofuranose. It functions in the pathway carbohydrate metabolism; D-ribose degradation; D-ribose 5-phosphate from beta-D-ribopyranose: step 1/2. Its function is as follows. Catalyzes the interconversion of beta-pyran and beta-furan forms of D-ribose. In Pectobacterium atrosepticum (strain SCRI 1043 / ATCC BAA-672) (Erwinia carotovora subsp. atroseptica), this protein is D-ribose pyranase.